A 469-amino-acid chain; its full sequence is UDP-N-acetylmuramoylalanine--D-glutamate ligase (469 aa).

125 to 131 is a binding site for ATP; that stretch reads GTNGKTT.

Belongs to the MurCDEF family.

Its subcellular location is the cytoplasm. It catalyses the reaction UDP-N-acetyl-alpha-D-muramoyl-L-alanine + D-glutamate + ATP = UDP-N-acetyl-alpha-D-muramoyl-L-alanyl-D-glutamate + ADP + phosphate + H(+). Its pathway is cell wall biogenesis; peptidoglycan biosynthesis. Cell wall formation. Catalyzes the addition of glutamate to the nucleotide precursor UDP-N-acetylmuramoyl-L-alanine (UMA). The sequence is that of UDP-N-acetylmuramoylalanine--D-glutamate ligase from Prochlorococcus marinus (strain NATL2A).